The following is a 224-amino-acid chain: Uracil phosphoribosyltransferase (224 aa).

Lys38 to Lys42 is a GTP binding site. Residues Arg87, Arg112, and Asp140–Thr148 each bind 5-phospho-alpha-D-ribose 1-diphosphate. Residues Ile204 and Gly209 to Ala211 contribute to the uracil site. Residue Asp210 coordinates 5-phospho-alpha-D-ribose 1-diphosphate.

The protein belongs to the UPRTase family. Mg(2+) serves as cofactor.

It catalyses the reaction UMP + diphosphate = 5-phospho-alpha-D-ribose 1-diphosphate + uracil. It participates in pyrimidine metabolism; UMP biosynthesis via salvage pathway; UMP from uracil: step 1/1. Its activity is regulated as follows. Allosterically activated by GTP. Functionally, catalyzes the conversion of uracil and 5-phospho-alpha-D-ribose 1-diphosphate (PRPP) to UMP and diphosphate. This Thermococcus gammatolerans (strain DSM 15229 / JCM 11827 / EJ3) protein is Uracil phosphoribosyltransferase.